The sequence spans 27 residues: Delta-actitoxin-Avd2a (27 aa).

Disulfide bonds link Cys3–Cys17, Cys4–Cys11, and Cys6–Cys22.

The protein belongs to the sea anemone short toxin (type III) family.

Its subcellular location is the secreted. It localises to the nematocyst. In terms of biological role, specific arthropod (crab and insect) toxin that inhibits inactivation of voltage-gated sodium channels. It competes well with the site-3 toxin LqhalphaIT (from the scorpion L.quinquestriatus (AC P17728)) on binding to cockroach neuronal membranes (Ki=21.4 nM), and inhibits the inactivation of D.melanogaster channel (DmNav1), but not that of mammalian Navs expressed in Xenopus oocytes. Its activity is synergically enhanced by ligands of receptor site-4 (Bj-xtrIT (AC P56637)). Its ability to inhibit the channel mutant DmNav1[D1701R] only decreases 5-fold, whereas the inhibition activity is completely lost by LqhalphaIT and Av2 when tested on DmNav1[D1701R]. The polypeptide is Delta-actitoxin-Avd2a (Anemonia sulcata (Mediterranean snakelocks sea anemone)).